A 264-amino-acid polypeptide reads, in one-letter code: Thymidylate synthase (264 aa).

DUMP is bound at residue Arg21. Position 51 (His51) interacts with (6R)-5,10-methylene-5,6,7,8-tetrahydrofolate. 126-127 contributes to the dUMP binding site; it reads RR. Cys146 functions as the Nucleophile in the catalytic mechanism. DUMP is bound by residues 166–169, Asn177, and 207–209; these read RSCD and HLY. Asp169 is a binding site for (6R)-5,10-methylene-5,6,7,8-tetrahydrofolate. Ala263 serves as a coordination point for (6R)-5,10-methylene-5,6,7,8-tetrahydrofolate.

The protein belongs to the thymidylate synthase family. Bacterial-type ThyA subfamily. Homodimer.

It localises to the cytoplasm. It carries out the reaction dUMP + (6R)-5,10-methylene-5,6,7,8-tetrahydrofolate = 7,8-dihydrofolate + dTMP. The protein operates within pyrimidine metabolism; dTTP biosynthesis. Functionally, catalyzes the reductive methylation of 2'-deoxyuridine-5'-monophosphate (dUMP) to 2'-deoxythymidine-5'-monophosphate (dTMP) while utilizing 5,10-methylenetetrahydrofolate (mTHF) as the methyl donor and reductant in the reaction, yielding dihydrofolate (DHF) as a by-product. This enzymatic reaction provides an intracellular de novo source of dTMP, an essential precursor for DNA biosynthesis. This Shewanella denitrificans (strain OS217 / ATCC BAA-1090 / DSM 15013) protein is Thymidylate synthase.